The primary structure comprises 224 residues: Urease accessory protein UreF (224 aa).

Belongs to the UreF family. As to quaternary structure, ureD, UreF and UreG form a complex that acts as a GTP-hydrolysis-dependent molecular chaperone, activating the urease apoprotein by helping to assemble the nickel containing metallocenter of UreC. The UreE protein probably delivers the nickel.

The protein localises to the cytoplasm. In terms of biological role, required for maturation of urease via the functional incorporation of the urease nickel metallocenter. This Pseudomonas putida (strain GB-1) protein is Urease accessory protein UreF.